Consider the following 138-residue polypeptide: ATP synthase epsilon chain (138 aa).

The protein belongs to the ATPase epsilon chain family. F-type ATPases have 2 components, CF(1) - the catalytic core - and CF(0) - the membrane proton channel. CF(1) has five subunits: alpha(3), beta(3), gamma(1), delta(1), epsilon(1). CF(0) has three main subunits: a, b and c.

Its subcellular location is the cell membrane. In terms of biological role, produces ATP from ADP in the presence of a proton gradient across the membrane. The chain is ATP synthase epsilon chain from Streptococcus uberis (strain ATCC BAA-854 / 0140J).